Consider the following 498-residue polypeptide: NADH-quinone oxidoreductase subunit N (498 aa).

The next 14 helical transmembrane spans lie at 10-30 (LMPLAPVMIVALTAVVVMLLI), 44-64 (VVGLNLAALYILLELFGGKFV), 68-88 (VMGMFMVDPFTMFYQFMILVA), 109-129 (ELYLLLLASVAGAMLMVASSH), 130-150 (YASFFISLELMSIPVYGLLAY), 164-184 (YLVLSATASAMLLMGMAYIYA), 207-227 (VLLGLALIIFAVAFKLSLAPF), 239-259 (PAPMATFLATAAKVATIGLFV), 273-293 (LVTVLTIIAVLSILVGNLLAV), 301-321 (ILGYSSIAHFGYLLIALISMT), 328-348 (VTVYVVTYVLTTIGAFGAVAL), 377-397 (ATLTVMMLSLAGIPLTAGFIG), 412-434 (FLAAMIIVGSGIGLYYYLRVMVV), and 458-478 (LMVLAAAALVIILGVYPDPMI).

It belongs to the complex I subunit 2 family. NDH-1 is composed of 14 different subunits. Subunits NuoA, H, J, K, L, M, N constitute the membrane sector of the complex.

The protein resides in the cell inner membrane. The enzyme catalyses a quinone + NADH + 5 H(+)(in) = a quinol + NAD(+) + 4 H(+)(out). Functionally, NDH-1 shuttles electrons from NADH, via FMN and iron-sulfur (Fe-S) centers, to quinones in the respiratory chain. The immediate electron acceptor for the enzyme in this species is believed to be ubiquinone. Couples the redox reaction to proton translocation (for every two electrons transferred, four hydrogen ions are translocated across the cytoplasmic membrane), and thus conserves the redox energy in a proton gradient. This is NADH-quinone oxidoreductase subunit N from Acinetobacter baumannii (strain AB0057).